Consider the following 599-residue polypeptide: mRNA export factor MEX67 (599 aa).

An N-acetylserine modification is found at S2. 2 LRR repeats span residues 163–184 and 189–210; these read IVESVNLADNQLKDISAISTLA and NLKNLCLANNQIFRFRSLEVWK. In terms of domain architecture, LRRCT spans 224–262; it reads NPITTDKLYRTEMLRLFPKLVVLDNVIVRDEQKLQTVYS. Positions 280–467 constitute an NTF2 domain; the sequence is SSTDFATNFL…VIIASDLLTV (188 aa). The disordered stretch occupies residues 408-439; it reads KPELESNKKTGKNNYQKNRRYNHGYNSTSNNK. The 54-residue stretch at 546–599 folds into the TAP-C domain; sequence PVQLELLNKLHLETKLNAEYTFMLAEQSNWNYEVAIKGFQSSMNGIPREAFVQF.

The protein belongs to the NXF family. Interacts with nucleoporin complex NUP84 and MTR2. Interacts with MIP6.

It is found in the nucleus. The protein resides in the cytoplasm. Involved in the export of mRNA from the nucleus to the cytoplasm. The chain is mRNA export factor MEX67 (MEX67) from Saccharomyces cerevisiae (strain ATCC 204508 / S288c) (Baker's yeast).